We begin with the raw amino-acid sequence, 367 residues long: Beta sliding clamp (367 aa).

The protein belongs to the beta sliding clamp family. As to quaternary structure, forms a ring-shaped head-to-tail homodimer around DNA which binds and tethers DNA polymerases and other proteins to the DNA. The DNA replisome complex has a single clamp-loading complex (3 tau and 1 each of delta, delta', psi and chi subunits) which binds 3 Pol III cores (1 core on the leading strand and 2 on the lagging strand) each with a beta sliding clamp dimer. Additional proteins in the replisome are other copies of gamma, psi and chi, Ssb, DNA helicase and RNA primase.

It localises to the cytoplasm. Confers DNA tethering and processivity to DNA polymerases and other proteins. Acts as a clamp, forming a ring around DNA (a reaction catalyzed by the clamp-loading complex) which diffuses in an ATP-independent manner freely and bidirectionally along dsDNA. Initially characterized for its ability to contact the catalytic subunit of DNA polymerase III (Pol III), a complex, multichain enzyme responsible for most of the replicative synthesis in bacteria; Pol III exhibits 3'-5' exonuclease proofreading activity. The beta chain is required for initiation of replication as well as for processivity of DNA replication. The polypeptide is Beta sliding clamp (dnaN) (Pseudomonas putida (strain ATCC 47054 / DSM 6125 / CFBP 8728 / NCIMB 11950 / KT2440)).